A 616-amino-acid polypeptide reads, in one-letter code: Chaperone protein HscA (616 aa).

Belongs to the heat shock protein 70 family.

Its function is as follows. Chaperone involved in the maturation of iron-sulfur cluster-containing proteins. Has a low intrinsic ATPase activity which is markedly stimulated by HscB. Involved in the maturation of IscU. This is Chaperone protein HscA from Shigella boydii serotype 18 (strain CDC 3083-94 / BS512).